A 240-amino-acid chain; its full sequence is Mitochondrial inner membrane protease ATP23 (240 aa).

H140 contributes to the a divalent metal cation binding site. The active site involves E141. Residue H144 coordinates a divalent metal cation.

It belongs to the peptidase M76 family.

It localises to the mitochondrion inner membrane. Its function is as follows. Has a dual role in the assembly of mitochondrial ATPase. Acts as a protease that removes N-terminal residues of mitochondrial ATPase CF(0) subunit 6 at the intermembrane space side. Also involved in the correct assembly of the membrane-embedded ATPase CF(0) particle, probably mediating association of subunit 6 with the subunit 9 ring. The sequence is that of Mitochondrial inner membrane protease ATP23 (ATP23) from Scheffersomyces stipitis (strain ATCC 58785 / CBS 6054 / NBRC 10063 / NRRL Y-11545) (Yeast).